A 428-amino-acid polypeptide reads, in one-letter code: Histone deacetylase 3 (428 aa).

A histone deacetylase region spans residues 3–316 (KTVAYFYDPD…WTYETSLLVE (314 aa)). Positions 17, 21, and 25 each coordinate 1D-myo-inositol 1,4,5,6-tetrakisphosphate. His-135 is a catalytic residue. Zn(2+)-binding residues include Asp-170, His-172, and Asp-259. Arg-265 is a binding site for 1D-myo-inositol 1,4,5,6-tetrakisphosphate. Basic and acidic residues-rich tracts occupy residues 388-405 (DRTD…ENYS) and 415-428 (DGDH…DVEI). A disordered region spans residues 388 to 428 (DRTDEADAEERGPEENYSRPEAPNEFYDGDHDNDKESDVEI). At Ser-424 the chain carries Phosphoserine.

This sequence belongs to the histone deacetylase family. HD type 1 subfamily. As to quaternary structure, interacts with HDAC7 and HDAC9. Interacts with DAXX, KDM4A, HDAC10 and DACH1. Found in a complex with NCOR1 and NCOR2. Component of the N-Cor repressor complex, at least composed of NCOR1, NCOR2, HDAC3, TBL1X, TBL1R, CORO2A and GPS2. Interacts with BCOR, MJD2A/JHDM3A, NRIP1, PRDM6 and SRY. Interacts with BTBD14B. Interacts with GLIS2. Interacts (via the DNA-binding domain) with NR2C1; the interaction recruits phosphorylated NR2C1 to PML bodies for sumoylation. Component of the Notch corepressor complex. Interacts with CBFA2T3 and NKAP. Interacts with APEX1; the interaction is not dependent on the acetylated status of APEX1. Interacts with ZMYND15. Interacts with SMRT/NCOR2 and BCL6 on DNA enhancer elements. Interacts with INSM1. Interacts with XBP1 isoform 1; the interaction occurs in endothelial cell (EC) under disturbed flow. Interacts (via C-terminus) with CCAR2 (via N-terminus). Interacts with and deacetylates MEF2D. Interacts with BEND3. Interacts with NKAPL. Interacts with DHX36; this interaction occurs in a RNA-dependent manner. Interacts weakly with CRY1; this interaction is enhanced in the presence of FBXL3. Interacts with FBXL3 and BMAL1. Interacts with NCOR1. Interacts with RARA. Interacts with SETD5. Post-translationally, sumoylated in vitro. Deubiquitinated on 'Lys-63'-linked ubiquitin chains by USP38; leading to a decreased level of histone acetylation.

It is found in the nucleus. It localises to the chromosome. The protein resides in the cytoplasm. The protein localises to the cytosol. It carries out the reaction N(6)-acetyl-L-lysyl-[histone] + H2O = L-lysyl-[histone] + acetate. It catalyses the reaction N(6)-acetyl-L-lysyl-[protein] + H2O = L-lysyl-[protein] + acetate. The enzyme catalyses N(6)-(2E)-butenoyl-L-lysyl-[protein] + H2O = (2E)-2-butenoate + L-lysyl-[protein]. The catalysed reaction is N(6)-(2-hydroxyisobutanoyl)-L-lysyl-[protein] + H2O = 2-hydroxy-2-methylpropanoate + L-lysyl-[protein]. It carries out the reaction N(6)-[(S)-lactoyl]-L-lysyl-[protein] + H2O = (S)-lactate + L-lysyl-[protein]. Inositol tetraphosphate (1D-myo-inositol 1,4,5,6-tetrakisphosphate) promotes the histone deacetylase activity by acting as an intermolecular glue between HDAC3 and NCOR2, thereby promoting its association with the N-Cor complex, a prerequisite for the histone deacetylase activity. Its function is as follows. Histone deacetylase that catalyzes the deacetylation of lysine residues on the N-terminal part of the core histones (H2A, H2B, H3 and H4), and some other non-histone substrates. Histone deacetylation gives a tag for epigenetic repression and plays an important role in transcriptional regulation, cell cycle progression and developmental events. Histone deacetylases act via the formation of large multiprotein complexes, such as N-Cor repressor complex, which activate the histone deacetylase activity. Participates in the BCL6 transcriptional repressor activity by deacetylating the H3 'Lys-27' (H3K27) on enhancer elements, antagonizing EP300 acetyltransferase activity and repressing proximal gene expression. Acts as a molecular chaperone for shuttling phosphorylated NR2C1 to PML bodies for sumoylation. Contributes, together with XBP1 isoform 1, to the activation of NFE2L2-mediated HMOX1 transcription factor gene expression in a PI(3)K/mTORC2/Akt-dependent signaling pathway leading to endothelial cell (EC) survival under disturbed flow/oxidative stress. Regulates both the transcriptional activation and repression phases of the circadian clock in a deacetylase activity-independent manner. During the activation phase, promotes the accumulation of ubiquitinated BMAL1 at the E-boxes and during the repression phase, blocks FBXL3-mediated CRY1/2 ubiquitination and promotes the interaction of CRY1 and BMAL1. The NCOR1-HDAC3 complex regulates the circadian expression of the core clock gene BMAL1 and the genes involved in lipid metabolism in the liver. Also functions as deacetylase for non-histone targets, such as KAT5, MEF2D, MAPK14, RARA and STAT3. Serves as a corepressor of RARA, mediating its deacetylation and repression, leading to inhibition of RARE DNA element binding. In addition to protein deacetylase activity, also acts as a protein-lysine deacylase by recognizing other acyl groups: catalyzes removal of (2E)-butenoyl (crotonyl), lactoyl (lactyl) and 2-hydroxyisobutanoyl (2-hydroxyisobutyryl) acyl groups from lysine residues, leading to protein decrotonylation, delactylation and de-2-hydroxyisobutyrylation, respectively. Catalyzes decrotonylation of MAPRE1/EB1. Mediates delactylation NBN/NBS1, thereby inhibiting DNA double-strand breaks (DSBs) via homologous recombination (HR). This chain is Histone deacetylase 3, found in Mus musculus (Mouse).